Consider the following 327-residue polypeptide: MAWWKAWVEQEGVTVKGSPHFNPVPDAETLYKAMKGIGTNEQAIIDVLTRRSSAQRQQIAKSFKAQFGSDLTETLKSELSGKFERLIVALMYPPYRYEAKELHDAMKGLGTKEGVIIEILASRTKNQLQEIMKAYEEDYGSSLEEDIQADTSGYLERILVCLLQGSRDDVTGFVDPGLALQDAQDLYAAGEKICGTDEMKFITILCTRSARHLMRVFEEYEKIANKSIEDSIKSETHGSLEEAMLTIVKCTRNLHCYFAERLHYAMKGAGTLDGTLIRNIVSRSEIDLNLIKGHYKKMYGKTLSSMIMEDTSGDYKNALLSLVGSDP.

4 Annexin repeats span residues 21-92 (FNPV…ALMY), 93-164 (PPYR…CLLQ), 177-249 (GLAL…TIVK), and 253-324 (NLHC…SLVG). Positions 266, 268, 270, and 310 each coordinate Ca(2+).

The protein belongs to the annexin family.

Its function is as follows. This protein is an anticoagulant protein that acts as an indirect inhibitor of the thromboplastin-specific complex, which is involved in the blood coagulation cascade. The chain is Annexin A8 (ANXA8) from Oryctolagus cuniculus (Rabbit).